We begin with the raw amino-acid sequence, 357 residues long: tRNA-specific 2-thiouridylase MnmA (357 aa).

ATP contacts are provided by residues 8-15 (GISGGVDS) and I34. Residue C96 is the Nucleophile of the active site. A disulfide bridge links C96 with C192. G120 is an ATP binding site. The tract at residues 142–144 (KDQ) is interaction with tRNA. The active-site Cysteine persulfide intermediate is the C192. Residues 301–302 (RY) are interaction with tRNA.

It belongs to the MnmA/TRMU family.

Its subcellular location is the cytoplasm. The enzyme catalyses S-sulfanyl-L-cysteinyl-[protein] + uridine(34) in tRNA + AH2 + ATP = 2-thiouridine(34) in tRNA + L-cysteinyl-[protein] + A + AMP + diphosphate + H(+). Its function is as follows. Catalyzes the 2-thiolation of uridine at the wobble position (U34) of tRNA, leading to the formation of s(2)U34. This is tRNA-specific 2-thiouridylase MnmA from Chlorobium phaeobacteroides (strain DSM 266 / SMG 266 / 2430).